A 529-amino-acid chain; its full sequence is Phosphoenolpyruvate carboxykinase (ATP) (529 aa).

Substrate is bound at residue Arg-52. Residues Arg-130, Asn-131, and Phe-133 each contribute to the Ca(2+) site. The substrate site is built by Tyr-191 and Lys-197. Residues Lys-197, His-216, and 232-240 (GLSGTGKTT) each bind ATP. Positions 197 and 216 each coordinate Mn(2+). Asp-253 contributes to the Mn(2+) binding site. Gly-267 is a Ca(2+) binding site. Residues Glu-281, Arg-319, 438–439 (RF), Phe-439, and Thr-444 each bind ATP. Residue Arg-319 coordinates substrate.

The protein belongs to the phosphoenolpyruvate carboxykinase (ATP) family. Dimer of dimers. Mn(2+) serves as cofactor.

The protein resides in the cytoplasm. The catalysed reaction is oxaloacetate + ATP = phosphoenolpyruvate + ADP + CO2. It participates in carbohydrate biosynthesis; gluconeogenesis. With respect to regulation, allosterically activated by calcium. In terms of biological role, involved in gluconeogenesis. Catalyzes the conversion of oxaloacetate (OAA) to phosphoenolpyruvate (PEP) through direct phosphoryl transfer between the nucleoside triphosphate and OAA. The polypeptide is Phosphoenolpyruvate carboxykinase (ATP) (Thermus thermophilus (strain ATCC 27634 / DSM 579 / HB8)).